The following is a 187-amino-acid chain: Aminodeoxychorismate synthase component 2 (187 aa).

A Glutamine amidotransferase type-1 domain is found at 1-187 (MILLIDNYDS…HQLLANFLHR (187 aa)). Residues cysteine 79, histidine 168, and glutamate 170 contribute to the active site.

As to quaternary structure, monomer. Heterodimer consisting of two non-identical subunits: a glutamine amidotransferase subunit (PabA) and a aminodeoxychorismate synthase subunit (PabB).

The enzyme catalyses chorismate + L-glutamine = 4-amino-4-deoxychorismate + L-glutamate. Its pathway is cofactor biosynthesis; tetrahydrofolate biosynthesis; 4-aminobenzoate from chorismate: step 1/2. Its activity is regulated as follows. Inhibited by 6-diazo-5-oxo-L-norleucine (DON). The inhibition is competitive with glutamine, but uncompetitive with chorismate. In terms of biological role, part of a heterodimeric complex that catalyzes the two-step biosynthesis of 4-amino-4-deoxychorismate (ADC), a precursor of p-aminobenzoate (PABA) and tetrahydrofolate. In the first step, a glutamine amidotransferase (PabA) generates ammonia as a substrate that, along with chorismate, is used in the second step, catalyzed by aminodeoxychorismate synthase (PabB) to produce ADC. PabA converts glutamine into glutamate only in the presence of stoichiometric amounts of PabB. The sequence is that of Aminodeoxychorismate synthase component 2 from Escherichia coli (strain K12).